A 199-amino-acid polypeptide reads, in one-letter code: Protein shisa-like-1 (199 aa).

The N-terminal stretch at 1 to 25 (MTSCGQQSLNVLAVLFSLLFSAVLS) is a signal peptide. Residues 26–97 (AHFRVCEPYT…SEGYMHNNYT (72 aa)) lie on the Extracellular side of the membrane. Residues Asn53 and Asn95 are each glycosylated (N-linked (GlcNAc...) asparagine). A helical transmembrane segment spans residues 98 to 118 (ALLGVWIYGFFVLMLLVLDLL). The Cytoplasmic segment spans residues 119-199 (YYSAMNYDIC…PLMTFQSSSA (81 aa)). The interval 146–199 (PRRWGNPARAPRPGQRAPQPQPPPGPLPQAPQAVHTLRGDAHSPPLMTFQSSSA) is disordered. Residues 152–163 (PARAPRPGQRAP) show a composition bias toward low complexity. The span at 164–174 (QPQPPPGPLPQ) shows a compositional bias: pro residues.

It belongs to the shisa family.

Its subcellular location is the membrane. The protein is Protein shisa-like-1 of Homo sapiens (Human).